Here is a 183-residue protein sequence, read N- to C-terminus: Translation initiation factor IF-3 (183 aa).

The protein belongs to the IF-3 family. Monomer.

It localises to the cytoplasm. Its function is as follows. IF-3 binds to the 30S ribosomal subunit and shifts the equilibrium between 70S ribosomes and their 50S and 30S subunits in favor of the free subunits, thus enhancing the availability of 30S subunits on which protein synthesis initiation begins. This is Translation initiation factor IF-3 from Pseudomonas putida (strain ATCC 700007 / DSM 6899 / JCM 31910 / BCRC 17059 / LMG 24140 / F1).